A 1957-amino-acid polypeptide reads, in one-letter code: [F-actin]-monooxygenase MICAL2 (1957 aa).

Residues 2-494 (GENEDEKQAQ…KHLYITKELE (493 aa)) form a monooxygenase domain region. FAD is bound by residues cysteine 97, 116-118 (EKR), 123-125 (RNN), phenylalanine 183, tyrosine 298, and aspartate 398. The Calponin-homology (CH) domain occupies 516 to 619 (DIRPSKLLTW…MVMYLSKFYE (104 aa)). Serine 631 carries the phosphoserine modification. Positions 660-681 (RKRTPRVDGQTGENDMNKRRRK) match the Nuclear localization signal motif. Disordered stretches follow at residues 660–714 (RKRT…NQNK) and 886–942 (QNKL…HPSH). The span at 687-714 (DEPSNFSSRSLGSNQECGSSKEGGNQNK) shows a compositional bias: polar residues. Pro residues predominate over residues 899-910 (PPSPPSRLPSPD). The segment covering 911 to 925 (PAASSSPSTVDSASP) has biased composition (low complexity). An LIM zinc-binding domain is found at 1000 to 1062 (DTCYFCKKRV…KPHFIHCKTN (63 aa)). Zn(2+)-binding residues include cysteine 1002, cysteine 1005, histidine 1023, cysteine 1026, cysteine 1029, cysteine 1032, cysteine 1052, and histidine 1055. Disordered regions lie at residues 1070 to 1143 (AELK…PSEW), 1168 to 1243 (SEDS…TPSK), 1258 to 1345 (VNKR…LYLP), 1361 to 1431 (GEDG…EGGP), 1467 to 1626 (KAGE…SPPC), and 1675 to 1779 (ESRQ…KEKK). Residues 1185–1195 (SHTEPCEEKPW) show a composition bias toward basic and acidic residues. Residues 1232 to 1243 (RANSFQSPTPSK) show a composition bias toward polar residues. The span at 1275 to 1294 (LPSSSSHSSSPPSSSSTSVS) shows a compositional bias: low complexity. Polar residues predominate over residues 1302–1316 (SPPQMTASEPLSQVS). An interaction with MAPK1 region spans residues 1324 to 1363 (TPNFRRRAVAQGAPREIPLYLPHHPKPEWAEYCLVSPGED). Basic and acidic residues-rich tracts occupy residues 1388-1402 (SNHR…KDRS) and 1413-1431 (GEDR…EGGP). The segment covering 1485–1496 (VLKPVRPLLLPR) has biased composition (low complexity). Residues 1552–1562 (GGKKAWAKQES) are compositionally biased toward basic and acidic residues. A compositionally biased stretch (polar residues) spans 1570–1579 (CTRSFSLRKT). The residue at position 1688 (serine 1688) is a Phosphoserine. Positions 1718 to 1733 (APPPPPPPPPPPPPPT) are enriched in pro residues. The span at 1751 to 1762 (ASSSASSTSSSS) shows a compositional bias: low complexity. A bMERB domain is found at 1796–1945 (KQEELKRLYK…EKAEDQHFES (150 aa)).

The protein belongs to the Mical family. As to quaternary structure, interacts with PLXNA4. Interacts with RAB1B. Interacts with MAPK1/ERK2. Interacts with RAB35, RAB8A, RAB10, RAB13 and RAB15 (in their GTP-bound forms); binding to RAB35 is of low affinity compared to other Rab proteins; at least in case of RAB8A may bind 2 molecules of RAB8A simultaneously through a high and a low affinity binding site, respectively. May interact with MAPK1/ERK2. Interacts with CORO1C; this interaction recruits MICAL2 to the actin filaments. The cofactor is FAD.

The protein resides in the nucleus. Its subcellular location is the cytoplasm. It catalyses the reaction L-methionyl-[F-actin] + NADPH + O2 + H(+) = L-methionyl-(R)-S-oxide-[F-actin] + NADP(+) + H2O. With respect to regulation, specifically inhibited by CCG-1423, a small molecule inhibitor of SRF:MKL1/MRTF-A-dependent transcription. Functionally, methionine monooxygenase that promotes depolymerization of F-actin by mediating oxidation of residues 'Met-44' and 'Met-47' on actin to form methionine-sulfoxide, resulting in actin filament disassembly and preventing repolymerization. Regulates the disassembly of branched actin networks also by oxidizing ARP3B-containing ARP2/3 complexes leading to ARP3B dissociation from the network. Acts as a key regulator of the SRF signaling pathway elicited by nerve growth factor and serum: mediates oxidation and subsequent depolymerization of nuclear actin, leading to increase MKL1/MRTF-A presence in the nucleus and promote SRF:MKL1/MRTF-A-dependent gene transcription. Does not activate SRF:MKL1/MRTF-A through RhoA. In Homo sapiens (Human), this protein is [F-actin]-monooxygenase MICAL2.